A 375-amino-acid polypeptide reads, in one-letter code: Growth/differentiation factor 8 (375 aa).

Positions 1–23 (MQKLAVYVYIYLFMQILVHPVAL) are cleaved as a signal peptide. The propeptide occupies 24–266 (DGSSQPTENA…VTDTPKRSRR (243 aa)). N-linked (GlcNAc...) asparagine glycosylation is present at Asn-71. 4 disulfide bridges follow: Cys-272/Cys-282, Cys-281/Cys-340, Cys-309/Cys-372, and Cys-313/Cys-374.

It belongs to the TGF-beta family. Homodimer; disulfide-linked.

The protein localises to the secreted. In terms of biological role, acts specifically as a negative regulator of skeletal muscle growth. The polypeptide is Growth/differentiation factor 8 (MSTN) (Meleagris gallopavo (Wild turkey)).